Consider the following 318-residue polypeptide: Homoserine kinase (318 aa).

An ATP-binding site is contributed by 97–107 (PIGSGLGSSAC).

The protein belongs to the GHMP kinase family. Homoserine kinase subfamily.

Its subcellular location is the cytoplasm. It catalyses the reaction L-homoserine + ATP = O-phospho-L-homoserine + ADP + H(+). It functions in the pathway amino-acid biosynthesis; L-threonine biosynthesis; L-threonine from L-aspartate: step 4/5. Catalyzes the ATP-dependent phosphorylation of L-homoserine to L-homoserine phosphate. The chain is Homoserine kinase from Vibrio parahaemolyticus serotype O3:K6 (strain RIMD 2210633).